The chain runs to 366 residues: MSGNTLGTLFTVTTFGESHGPAIGCVIDGCPPGLALNEADIQLELDRRKPGTSRHVTQRQEEDKVEILSGVFEGQTTGAPIALLIRNTDQRSKDYGNIADTFRPGHADYTYWQKYGIRDYRGGGRSSARLTAPTVAAGAVAKKWLREKFGTEIRGYMAALGEIDVPFVDWAHVRENPFFVPNQQIVPQLEAYMDALRKEGDSIGARINVVASGVPVGLGEPLFDRLDADIAHAMMGINAVKGVEIGAGFASVAQRGSVHGDELTPEGFVGNHAGGVLGGISTGQDITVSIAIKPTSSIRTPRRSIDKAGQPAVVETFGRHDPCVGIRATPIAESMLALVLIDHALRHRAQCGDVSVSTPKIAASAP.

Residues arginine 48 and arginine 54 each coordinate NADP(+). Residues 125–127 (RSS), 238–239 (NA), glycine 278, 293–297 (KPTSS), and arginine 319 each bind FMN.

It belongs to the chorismate synthase family. Homotetramer. It depends on FMNH2 as a cofactor.

The enzyme catalyses 5-O-(1-carboxyvinyl)-3-phosphoshikimate = chorismate + phosphate. It participates in metabolic intermediate biosynthesis; chorismate biosynthesis; chorismate from D-erythrose 4-phosphate and phosphoenolpyruvate: step 7/7. In terms of biological role, catalyzes the anti-1,4-elimination of the C-3 phosphate and the C-6 proR hydrogen from 5-enolpyruvylshikimate-3-phosphate (EPSP) to yield chorismate, which is the branch point compound that serves as the starting substrate for the three terminal pathways of aromatic amino acid biosynthesis. This reaction introduces a second double bond into the aromatic ring system. This chain is Chorismate synthase, found in Paraburkholderia xenovorans (strain LB400).